Here is a 207-residue protein sequence, read N- to C-terminus: uncharacterized protein (207 aa).

A helical membrane pass occupies residues 177-197 (LILAIGFIIGILLPTFFILLG).

The protein resides in the membrane. This is an uncharacterized protein from Haemophilus influenzae (strain ATCC 51907 / DSM 11121 / KW20 / Rd).